The chain runs to 180 residues: Cytidylate kinase (180 aa).

7–15 (GPPGSGKST) provides a ligand contact to ATP.

It belongs to the cytidylate kinase family. Type 2 subfamily.

It is found in the cytoplasm. The enzyme catalyses CMP + ATP = CDP + ADP. It carries out the reaction dCMP + ATP = dCDP + ADP. The polypeptide is Cytidylate kinase (Sulfurisphaera tokodaii (strain DSM 16993 / JCM 10545 / NBRC 100140 / 7) (Sulfolobus tokodaii)).